An 86-amino-acid polypeptide reads, in one-letter code: uncharacterized protein (86 aa).

Residues 4–24 (LFFTLIAFVAIILLMSIGFII) form a helical membrane-spanning segment.

Its subcellular location is the membrane. This is an uncharacterized protein from Haemophilus influenzae (strain ATCC 51907 / DSM 11121 / KW20 / Rd).